Reading from the N-terminus, the 242-residue chain is ATP-dependent dethiobiotin synthetase BioD (242 aa).

Residue 12–17 participates in ATP binding; that stretch reads EVGKTV. Threonine 16 lines the Mg(2+) pocket. The active site involves lysine 37. Residue serine 41 participates in substrate binding. ATP-binding positions include aspartate 51 and 112–115; that span reads EGAG. The Mg(2+) site is built by aspartate 51 and glutamate 112.

It belongs to the dethiobiotin synthetase family. As to quaternary structure, homodimer. The cofactor is Mg(2+).

The protein localises to the cytoplasm. It catalyses the reaction (7R,8S)-7,8-diammoniononanoate + CO2 + ATP = (4R,5S)-dethiobiotin + ADP + phosphate + 3 H(+). It participates in cofactor biosynthesis; biotin biosynthesis; biotin from 7,8-diaminononanoate: step 1/2. In terms of biological role, catalyzes a mechanistically unusual reaction, the ATP-dependent insertion of CO2 between the N7 and N8 nitrogen atoms of 7,8-diaminopelargonic acid (DAPA, also called 7,8-diammoniononanoate) to form a ureido ring. The polypeptide is ATP-dependent dethiobiotin synthetase BioD (Bacillus cereus (strain B4264)).